Here is a 93-residue protein sequence, read N- to C-terminus: Protein 6 (93 aa).

Residues Met1 to His16 are compositionally biased toward polar residues. The interval Met1 to Asp52 is disordered.

Its subcellular location is the virion. This is Protein 6 (6) from Rice yellow stunt virus (RYSV).